Here is a 188-residue protein sequence, read N- to C-terminus: Mediator of RNA polymerase II transcription subunit 11 (188 aa).

The stretch at 46-72 forms a coiled coil; the sequence is KNKMEDNANNFKKLITQVENELSAQMQ. The disordered stretch occupies residues 116 to 188; it reads DPTSDEPQTT…MTDDDDDMEQ (73 aa). Residues 123-141 show a composition bias toward acidic residues; sequence QTTEEDEEDGSDDLNEDGA. The span at 146–155 shows a compositional bias: low complexity; that stretch reads SSTVTSSTTD. The segment covering 171 to 180 has biased composition (basic and acidic residues); that stretch reads SQEESGRQMT.

The protein belongs to the Mediator complex subunit 11 family. As to quaternary structure, component of the Mediator complex.

It is found in the nucleus. Functionally, component of the Mediator complex, a coactivator involved in the regulated transcription of nearly all RNA polymerase II-dependent genes. Mediator functions as a bridge to convey information from gene-specific regulatory proteins to the basal RNA polymerase II transcription machinery. Mediator is recruited to promoters by direct interactions with regulatory proteins and serves as a scaffold for the assembly of a functional pre-initiation complex with RNA polymerase II and the general transcription factors. The sequence is that of Mediator of RNA polymerase II transcription subunit 11 (mdt-11) from Caenorhabditis elegans.